A 132-amino-acid polypeptide reads, in one-letter code: Small ribosomal subunit protein uS8 (132 aa).

Belongs to the universal ribosomal protein uS8 family. Part of the 30S ribosomal subunit. Contacts proteins S5 and S12.

One of the primary rRNA binding proteins, it binds directly to 16S rRNA central domain where it helps coordinate assembly of the platform of the 30S subunit. This is Small ribosomal subunit protein uS8 from Paramagnetospirillum magneticum (strain ATCC 700264 / AMB-1) (Magnetospirillum magneticum).